Consider the following 1154-residue polypeptide: Serine-aspartate repeat-containing protein E (1154 aa).

The N-terminal stretch at 1-52 is a signal peptide; it reads MINRDNKKAITKKGMISNRLNKFSIRKYTVGTASILVGTTLIFGLGNQEAKA. A YSIRK-G/S signaling motif motif is present at residues 23-34; sequence FSIRKYTVGTAS. The tract at residues 53–606 is ligand binding A region; sequence AENTSTENAK…GDGTVKPEEK (554 aa). The segment at 54–230 is disordered; sequence ENTSTENAKQ…SKEELKNNPE (177 aa). Over residues 61–75 the composition is skewed to basic and acidic residues; that stretch reads AKQDDATTSDNKEVV. Low complexity predominate over residues 77-90; the sequence is ETENNSTTENNSTN. The span at 92 to 108 shows a compositional bias: basic and acidic residues; the sequence is IKKETNTDSQPEAKKES. The segment covering 118-129 has biased composition (polar residues); that stretch reads NNVTATTETKPQ. Residues 130–145 are compositionally biased toward basic and acidic residues; sequence NIEKENVKPSTDKTAT. Residues 166 to 178 are compositionally biased toward low complexity; the sequence is TTKPSTSEPSTSE. The span at 179-212 shows a compositional bias: polar residues; that stretch reads IQTKPTTPQESTNIENSQPQPTPSKVDNQVTDAT. Over residues 221-230 the composition is skewed to basic and acidic residues; sequence SKEELKNNPE. 3 CNA-B domains span residues 607–719, 720–829, and 830–940; these read LYKI…YKEP, KYNL…YKTP, and KYSL…EEDT. The disordered stretch occupies residues 904-1129; the sequence is VTNTTEDDKD…TGSENNGSNN (226 aa). Acidic residues-rich tracts occupy residues 908–918 and 935–1093; these read TEDDKDADGGE and YFEE…DSDS. The short motif at 1117 to 1121 is the LPXTG sorting signal element; that stretch reads LPETG. Threonine 1120 bears the Pentaglycyl murein peptidoglycan amidated threonine mark. Positions 1121–1154 are cleaved as a propeptide — removed by sortase; it reads GSENNGSNNATLFGGLFAALGSLLLFGRRKKQNK.

This sequence belongs to the serine-aspartate repeat-containing protein (SDr) family. Interacts with host complement factor H/CFAH (via C-terminus). Interacts with host complement regulator C4BPA.

It is found in the secreted. It localises to the cell wall. In terms of biological role, cell surface-associated calcium-binding protein which plays an important role in adhesion and pathogenesis. Contributes to the resistance to killing by innate immune components in blood and thus attenuates bacterial clearance by interacting with host complement factor H/CFAH and modulating its activity. Also inhibits bacterial opsonization and killing by interacting with host complement regulator C4BPA and thus inhibiting classical complement pathway activation. This chain is Serine-aspartate repeat-containing protein E (sdrE), found in Staphylococcus aureus (strain USA300).